A 53-amino-acid chain; its full sequence is Large ribosomal subunit protein bL32c (53 aa).

Belongs to the bacterial ribosomal protein bL32 family.

It localises to the plastid. The protein resides in the chloroplast. The protein is Large ribosomal subunit protein bL32c of Coffea arabica (Arabian coffee).